We begin with the raw amino-acid sequence, 339 residues long: DNA-directed RNA polymerase subunit alpha (339 aa).

The tract at residues 1–234 is alpha N-terminal domain (alpha-NTD); it reads MIEKNWQELI…DQFQIFINFE (234 aa). The alpha C-terminal domain (alpha-CTD) stretch occupies residues 251-339; that stretch reads FNPALLRKVD…DLAKRFEDHV (89 aa).

The protein belongs to the RNA polymerase alpha chain family. Homodimer. The RNAP catalytic core consists of 2 alpha, 1 beta, 1 beta' and 1 omega subunit. When a sigma factor is associated with the core the holoenzyme is formed, which can initiate transcription.

The enzyme catalyses RNA(n) + a ribonucleoside 5'-triphosphate = RNA(n+1) + diphosphate. DNA-dependent RNA polymerase catalyzes the transcription of DNA into RNA using the four ribonucleoside triphosphates as substrates. The polypeptide is DNA-directed RNA polymerase subunit alpha (Maricaulis maris (strain MCS10) (Caulobacter maris)).